A 276-amino-acid polypeptide reads, in one-letter code: Diaminopimelate epimerase (276 aa).

3 residues coordinate substrate: N11, Q44, and N64. Residue C73 is the Proton donor of the active site. Substrate is bound by residues 74–75 (GN), N157, N190, and 208–209 (ER). Catalysis depends on C217, which acts as the Proton acceptor. Residue 218 to 219 (GS) participates in substrate binding.

This sequence belongs to the diaminopimelate epimerase family. In terms of assembly, homodimer.

The protein localises to the cytoplasm. The enzyme catalyses (2S,6S)-2,6-diaminopimelate = meso-2,6-diaminopimelate. It participates in amino-acid biosynthesis; L-lysine biosynthesis via DAP pathway; DL-2,6-diaminopimelate from LL-2,6-diaminopimelate: step 1/1. Catalyzes the stereoinversion of LL-2,6-diaminopimelate (L,L-DAP) to meso-diaminopimelate (meso-DAP), a precursor of L-lysine and an essential component of the bacterial peptidoglycan. The sequence is that of Diaminopimelate epimerase from Blochmanniella floridana.